The chain runs to 708 residues: Meiotic sister-chromatid recombination protein 6, mitochondrial (708 aa).

The N-terminal 15 residues, 1 to 15, are a transit peptide targeting the mitochondrion; the sequence is MLSVRISARQCSVRG. Polar residues predominate over residues 19 to 36; it reads QANNVSQPAKDNATNGSD. A disordered region spans residues 19–44; sequence QANNVSQPAKDNATNGSDAATEKKGT.

The protein resides in the mitochondrion. Functionally, may be involved in the control of meiotic sister-chromatid recombination. In Kluyveromyces lactis (strain ATCC 8585 / CBS 2359 / DSM 70799 / NBRC 1267 / NRRL Y-1140 / WM37) (Yeast), this protein is Meiotic sister-chromatid recombination protein 6, mitochondrial (MSC6).